An 84-amino-acid polypeptide reads, in one-letter code: Large ribosomal subunit protein bL27 (84 aa).

A disordered region spans residues 1-21 (MAHKKGGGSTKNGRDSNPKYL).

Belongs to the bacterial ribosomal protein bL27 family.

The sequence is that of Large ribosomal subunit protein bL27 from Chlorobium luteolum (strain DSM 273 / BCRC 81028 / 2530) (Pelodictyon luteolum).